A 266-amino-acid polypeptide reads, in one-letter code: uncharacterized protein (266 aa).

This is an uncharacterized protein from Mycobacterium tuberculosis (strain CDC 1551 / Oshkosh).